The primary structure comprises 152 residues: MSLVIPEKFQHILRVLNTNIDGRRKIAFAITAIKGVGRRYAHVVLRKADIDLSKRAGELTEDEVERVVTIMQNPRQYKIPDWFLNRQKDVKDGKYSQVLANGLDNKLREDLERLKKIRAHRGLRHFWGLRVRGQHTKTTGRRGRTVGVSKKK.

It belongs to the universal ribosomal protein uS13 family. In terms of assembly, component of the small ribosomal subunit.

The protein resides in the cytoplasm. In terms of biological role, component of the small ribosomal subunit. The ribosome is a large ribonucleoprotein complex responsible for the synthesis of proteins in the cell. This Ictalurus punctatus (Channel catfish) protein is Small ribosomal subunit protein uS13 (rps18).